Reading from the N-terminus, the 383-residue chain is Acetylornithine deacetylase (383 aa).

Residue histidine 80 participates in Zn(2+) binding. The active site involves aspartate 82. Aspartate 112 contributes to the Zn(2+) binding site. Glutamate 144 is a catalytic residue. Residues glutamate 145, glutamate 169, and histidine 355 each contribute to the Zn(2+) site.

The protein belongs to the peptidase M20A family. ArgE subfamily. As to quaternary structure, homodimer. Zn(2+) is required as a cofactor. Requires Co(2+) as cofactor. The cofactor is glutathione.

The protein localises to the cytoplasm. The catalysed reaction is N(2)-acetyl-L-ornithine + H2O = L-ornithine + acetate. The protein operates within amino-acid biosynthesis; L-arginine biosynthesis; L-ornithine from N(2)-acetyl-L-ornithine (linear): step 1/1. Functionally, catalyzes the hydrolysis of the amide bond of N(2)-acetylated L-amino acids. Cleaves the acetyl group from N-acetyl-L-ornithine to form L-ornithine, an intermediate in L-arginine biosynthesis pathway, and a branchpoint in the synthesis of polyamines. The sequence is that of Acetylornithine deacetylase from Shigella boydii serotype 4 (strain Sb227).